The primary structure comprises 85 residues: Acylphosphatase (85 aa).

The Acylphosphatase-like domain maps to 3–85 (AARFVVSGVV…PARFRRLKTL (83 aa)). Catalysis depends on residues Arg-18 and Asn-36. The tract at residues 66–85 (PPRSRRSRARPARFRRLKTL) is disordered.

It belongs to the acylphosphatase family.

The enzyme catalyses an acyl phosphate + H2O = a carboxylate + phosphate + H(+). This Xanthomonas axonopodis pv. citri (strain 306) protein is Acylphosphatase (acyP).